A 379-amino-acid chain; its full sequence is Protein FAM53B (379 aa).

2 disordered regions span residues 206 to 257 (CPAE…HKQR) and 302 to 348 (AQND…AGKE). The span at 212–236 (SPESTPELQRRSGQSGLARSRSQPC) shows a compositional bias: polar residues. Residues 239-249 (NHQKIGVKRRR) show a composition bias toward basic residues. The Nuclear localization signal motif lies at 246–249 (KRRR). Over residues 326–342 (QSDSSSADALIHQSESS) the composition is skewed to polar residues.

Belongs to the FAM53 family. Interacts with ctnnb1. As to expression, mainly expressed in proliferating tissues.

It localises to the nucleus. Functionally, acts as a regulator of Wnt signaling pathway by regulating beta-catenin (ctnnb1) nuclear localization. Required for appendage regeneration by regulating cell proliferation. In Danio rerio (Zebrafish), this protein is Protein FAM53B.